Consider the following 485-residue polypeptide: Endo-1,4-beta-xylanase C (485 aa).

The signal sequence occupies residues M1–A19. Residues K34–D234 enclose the GH11 domain. Residues N56 and N107 are each glycosylated (N-linked (GlcNAc...) asparagine). Residue E128 is the Nucleophile of the active site. N175 is a glycosylation site (N-linked (GlcNAc...) asparagine). The active-site Proton donor is the E221. Positions A250 to C450 are disordered. Low complexity-rich tracts occupy residues A265–H330 and G344–G354. 7 consecutive repeat copies span residues G275–Q280, G281–Q286, G287–Q292, G293–Q298, G299–Q304, G310–Q315, and G316–Q321. The 7 X 6 AA tandem repeats of G-Q-Q-P-P-Q stretch occupies residues G275–Q321. N349 is a glycosylation site (N-linked (GlcNAc...) asparagine). 8 repeat units span residues G353–Q361, G362–Q370, G371–Q379, G380–Q388, G389–N397, G399–Q407, G408–Q416, and G417–Q425. Residues G353–Q425 form an 8 X 9 AA tandem repeats of G-G-[SN]-P-W-G-G-N-Q region. Residues S355 to Q425 show a composition bias toward gly residues. A compositionally biased stretch (low complexity) spans W426–S445. Residue N443 is glycosylated (N-linked (GlcNAc...) asparagine). Positions N449–Q484 constitute a CBM1 domain.

This sequence belongs to the glycosyl hydrolase 11 (cellulase G) family.

It localises to the secreted. The catalysed reaction is Endohydrolysis of (1-&gt;4)-beta-D-xylosidic linkages in xylans.. Its pathway is glycan degradation; xylan degradation. Endo-1,4-beta-xylanase involved in the hydrolysis of xylan, a major structural heterogeneous polysaccharide found in plant biomass representing the second most abundant polysaccharide in the biosphere, after cellulose. The sequence is that of Endo-1,4-beta-xylanase C (xynC) from Neocallimastix patriciarum (Rumen fungus).